We begin with the raw amino-acid sequence, 902 residues long: Proline-rich transmembrane protein 4 (902 aa).

Residues 1–18 (MAGRGCLELGLFCWVLLA) form the signal peptide. Disordered regions lie at residues 120-149 (FTPW…SQPR) and 262-337 (PPPL…SGQP). Over residues 125-139 (SSLPPESTSPLSGPT) the composition is skewed to low complexity. Residues 271 to 301 (SSPSPLDSVASPSSASIKTTPVQHDPTVSTS) show a composition bias toward polar residues. 5 helical membrane passes run 371–391 (AGAL…LLPW), 393–413 (CPPG…AGTT), 431–451 (ALAW…GLGL), 465–485 (PIGL…AALG), and 501–521 (GLHA…SCWG). Residue Ser642 is modified to Phosphoserine. Disordered regions lie at residues 700–721 (GARA…TVDF), 771–811 (KTGA…SLCG), and 836–872 (VLSP…ASEL). Over residues 703-717 (ANTTQSPASSPSSDC) the composition is skewed to polar residues. Pro residues predominate over residues 786–798 (SPAPPELPSPGAW). 2 stretches are compositionally biased toward low complexity: residues 799–811 (PPGS…SLCG) and 843–854 (SESSPSLPASGS).

The protein resides in the membrane. The protein is Proline-rich transmembrane protein 4 (Prrt4) of Rattus norvegicus (Rat).